Reading from the N-terminus, the 342-residue chain is Holliday junction branch migration complex subunit RuvB (342 aa).

Residues 1 to 181 (MENRMVTPFD…FGMLCAMEFY (181 aa)) form a large ATPase domain (RuvB-L) region. Residues L20, R21, G62, K65, T66, T67, 128-130 (EDY), R171, Y181, and R218 contribute to the ATP site. A Mg(2+)-binding site is contributed by T66. Residues 182-252 (TDEELMEIVV…GAKAALDLLE (71 aa)) are small ATPAse domain (RuvB-S). The tract at residues 255–342 (KEGLDKIDNK…KDNQVSIFNK (88 aa)) is head domain (RuvB-H). DNA contacts are provided by R310 and R315.

It belongs to the RuvB family. In terms of assembly, homohexamer. Forms an RuvA(8)-RuvB(12)-Holliday junction (HJ) complex. HJ DNA is sandwiched between 2 RuvA tetramers; dsDNA enters through RuvA and exits via RuvB. An RuvB hexamer assembles on each DNA strand where it exits the tetramer. Each RuvB hexamer is contacted by two RuvA subunits (via domain III) on 2 adjacent RuvB subunits; this complex drives branch migration. In the full resolvosome a probable DNA-RuvA(4)-RuvB(12)-RuvC(2) complex forms which resolves the HJ.

The protein localises to the cytoplasm. It carries out the reaction ATP + H2O = ADP + phosphate + H(+). Its function is as follows. The RuvA-RuvB-RuvC complex processes Holliday junction (HJ) DNA during genetic recombination and DNA repair, while the RuvA-RuvB complex plays an important role in the rescue of blocked DNA replication forks via replication fork reversal (RFR). RuvA specifically binds to HJ cruciform DNA, conferring on it an open structure. The RuvB hexamer acts as an ATP-dependent pump, pulling dsDNA into and through the RuvAB complex. RuvB forms 2 homohexamers on either side of HJ DNA bound by 1 or 2 RuvA tetramers; 4 subunits per hexamer contact DNA at a time. Coordinated motions by a converter formed by DNA-disengaged RuvB subunits stimulates ATP hydrolysis and nucleotide exchange. Immobilization of the converter enables RuvB to convert the ATP-contained energy into a lever motion, pulling 2 nucleotides of DNA out of the RuvA tetramer per ATP hydrolyzed, thus driving DNA branch migration. The RuvB motors rotate together with the DNA substrate, which together with the progressing nucleotide cycle form the mechanistic basis for DNA recombination by continuous HJ branch migration. Branch migration allows RuvC to scan DNA until it finds its consensus sequence, where it cleaves and resolves cruciform DNA. In Clostridium botulinum (strain Loch Maree / Type A3), this protein is Holliday junction branch migration complex subunit RuvB.